Consider the following 586-residue polypeptide: Transmembrane protease serine 13 (586 aa).

Disordered regions lie at residues 1-115 and 131-157; these read MERD…VTTS and PIRS…LPKF. Topologically, residues 1-165 are cytoplasmic; sequence MERDSHGNAS…KFTWREGQKQ (165 aa). Residues 9 to 13 form a 1-1 repeat; it reads ASPAR. The 13 X 5 AA repeats of A-S-P-A-[GLQR] stretch occupies residues 9–93; the sequence is ASPARTPSAG…ASPARASPAL (85 aa). The 2-1; approximate repeat unit spans residues 14-18; it reads TPSAG. A compositionally biased stretch (low complexity) spans 14–52; the sequence is TPSAGASPAQASPAGTPPGRASPAQASPAQASPAGTPPG. The segment at 14-68 is 4 X 5 AA repeats of T-P-P-G-R; that stretch reads TPSAGASPAQASPAGTPPGRASPAQASPAQASPAGTPPGRASPAQASPAGTPPGR. 10 consecutive repeat copies span residues 19-23, 24-28, 29-33, 34-38, 39-43, 44-48, 49-53, 54-58, 59-63, and 64-68. Residues 69 to 78 form a 1-9; approximate repeat; that stretch reads ASPGRASPAQ. Composition is skewed to low complexity over residues 69-111 and 133-144; these read ASPG…RSAS and RSSPARSAPATR. A run of 3 repeats spans residues 79 to 83, 84 to 88, and 89 to 93. Residues 166-186 traverse the membrane as a helical; Signal-anchor for type II membrane protein segment; that stretch reads LPLIGCVLLLIALVVSLIILF. The Extracellular segment spans residues 187 to 586; sequence QFWQGHTGIR…GGDPGGAPRL (400 aa). Residues 195–325 form the SRCR domain; it reads IRYKEQRESC…HCGLRAMTGR (131 aa). In terms of domain architecture, LDL-receptor class A spans 204–226; that stretch reads CPKHAVRCDGVVDCKLKSDELGC. 3 disulfide bridges follow: Cys-250/Cys-314, Cys-263/Cys-317, and Cys-351/Cys-367. Asn-255 and Asn-292 each carry an N-linked (GlcNAc...) asparagine glycan. The Peptidase S1 domain occupies 326 to 559; it reads IVGGALASDS…VLPWIYSKME (234 aa). His-366 serves as the catalytic Charge relay system. An N-linked (GlcNAc...) asparagine glycan is attached at Asn-405. Asp-414 (charge relay system) is an active-site residue. N-linked (GlcNAc...) asparagine glycosylation occurs at Asn-445. 3 disulfides stabilise this stretch: Cys-448-Cys-517, Cys-480-Cys-496, and Cys-507-Cys-535. Residue Ser-511 is the Charge relay system of the active site. Residues 565-574 show a composition bias toward polar residues; it reads QDTAPSRLGT. The tract at residues 565–586 is disordered; that stretch reads QDTAPSRLGTSSGGDPGGAPRL. Gly residues predominate over residues 575–586; that stretch reads SSGGDPGGAPRL.

Belongs to the peptidase S1 family. As to quaternary structure, interacts with SPINT1/HAI-1; the interaction promotes the phosphorylation and cell membrane localization of TMPRSS13. Interacts with SPINT2/HAI-2; the interaction promotes the phosphorylation and cell membrane localization of TMPRSS13. The inactive zymogen is post-translationally modified and then trafficked to the cell surface, whereby it undergoes autocatalytic cleavage resulting in an activated form that is released extracellularly. In terms of processing, phosphorylation is required for localization at the cell surface. Phosphorylation increases following inhibition of protease activity by SPINT2/HAI-2. Post-translationally, N-glycosylation of Asn-405 and Asn-445 is required for exit from the endoplasmic reticulum and trafficking to the cell surface. Also required for autocleavage of the zymogen, activation and secretion of the mature protein. Expressed in placenta. In terms of tissue distribution, predominantly expressed in lung, placenta, pancreas, and prostate. As to expression, expressed in lung, placenta, pancreas, and prostate. Weakly expressed in testis and peripheral blood lymphocytes.

The protein localises to the cell membrane. It localises to the secreted. It is found in the cytoplasm. Cleavage of HGF is inhibited by SPINT1/HAI-1 via the BPTI/Kunitz inhibitor 1 domain. Functionally, serine protease. Cleaves the proform of PRSS8/prostasin to form the active protein. Cleaves the proform of HGF to form the active protein which promotes MAPK signaling. Promotes the formation of the stratum corneum and subsequently the epidermal barrier in embryos. The chain is Transmembrane protease serine 13 (TMPRSS13) from Homo sapiens (Human).